Here is a 387-residue protein sequence, read N- to C-terminus: F-box protein DOR (387 aa).

The 46-residue stretch at 19-64 (DENFEPIPIDLVIEIFSRSPVKSIARCRCVSKLWASILRLPYFTEL) folds into the F-box domain.

In terms of assembly, part of a SCF (ASK-cullin-F-box) protein ligase complex. Interacts with ASK14 and CUL1. Strongly expressed in guard cells. Mostly represented in seedlings, leaves and flowers, and, to a lower extent, in roots and siliques.

The protein operates within protein modification; protein ubiquitination. In terms of biological role, component of SCF(ASK-cullin-F-box) E3 ubiquitin ligase complexes, which may mediate the ubiquitination and subsequent proteasomal degradation of target proteins. Negative regulator of guard cell abscisic acid (ABA) signaling, especially during drought stress. The chain is F-box protein DOR (DOR) from Arabidopsis thaliana (Mouse-ear cress).